The sequence spans 358 residues: Methylthioribose-1-phosphate isomerase (358 aa).

Substrate-binding positions include Arg54–Ala56, Arg96, and Gln205. The active-site Proton donor is the Asp246. Substrate is bound at residue Asn256–Lys257.

The protein belongs to the eIF-2B alpha/beta/delta subunits family. MtnA subfamily.

It catalyses the reaction 5-(methylsulfanyl)-alpha-D-ribose 1-phosphate = 5-(methylsulfanyl)-D-ribulose 1-phosphate. It functions in the pathway amino-acid biosynthesis; L-methionine biosynthesis via salvage pathway; L-methionine from S-methyl-5-thio-alpha-D-ribose 1-phosphate: step 1/6. In terms of biological role, catalyzes the interconversion of methylthioribose-1-phosphate (MTR-1-P) into methylthioribulose-1-phosphate (MTRu-1-P). The protein is Methylthioribose-1-phosphate isomerase of Pseudomonas syringae pv. tomato (strain ATCC BAA-871 / DC3000).